We begin with the raw amino-acid sequence, 403 residues long: Aminomethyltransferase, mitochondrial (403 aa).

A mitochondrion-targeting transit peptide spans 1 to 28 (MQRAMTVVPHLGLRLQALPLALGRPLSR). Substrate-binding residues include E232, R261, and Y399.

Belongs to the GcvT family. The glycine cleavage system is composed of four proteins: P, T, L and H.

The protein resides in the mitochondrion. The enzyme catalyses N(6)-[(R)-S(8)-aminomethyldihydrolipoyl]-L-lysyl-[protein] + (6S)-5,6,7,8-tetrahydrofolate = N(6)-[(R)-dihydrolipoyl]-L-lysyl-[protein] + (6R)-5,10-methylene-5,6,7,8-tetrahydrofolate + NH4(+). Its function is as follows. The glycine cleavage system catalyzes the degradation of glycine. The polypeptide is Aminomethyltransferase, mitochondrial (Canis lupus familiaris (Dog)).